The following is a 469-amino-acid chain: GDNF family receptor alpha-1 (469 aa).

A signal peptide spans 1–27 (MFLALLYLALPLADVLLSAEVSGLPGG). 3 consecutive repeat copies span residues 28–116 (DRLD…LQGN), 149–237 (KGNN…YEDR), and 238–341 (EKPN…KNAI). A disulfide bridge links Cys-39 with Cys-45. N-linked (GlcNAc...) asparagine glycans are attached at residues Asn-62 and Asn-163. Intrachain disulfides connect Cys-153–Cys-213, Cys-160–Cys-166, Cys-177–Cys-191, Cys-186–Cys-232, Cys-215–Cys-220, Cys-242–Cys-312, Cys-249–Cys-255, Cys-266–Cys-284, Cys-276–Cys-336, and Cys-314–Cys-324. N-linked (GlcNAc...) asparagine glycans are attached at residues Asn-346 and Asn-405. A lipid anchor (GPI-anchor amidated serine) is attached at Ser-430. Positions 431 to 469 (HISSENSFALPTSFYPSTPLILMTIALSLFLFLSSSVVL) are cleaved as a propeptide — removed in mature form.

It belongs to the GDNFR family. In terms of assembly, interacts with GDNF ligand and RET: forms a 2:2:2 ternary complex composed of GDNF ligand, GFRA1 and RET receptor.

It localises to the cell membrane. Its subcellular location is the golgi apparatus. The protein localises to the trans-Golgi network. The protein resides in the endosome. It is found in the multivesicular body. Functionally, coreceptor for GDNF, a neurotrophic factor that enhances survival and morphological differentiation of dopaminergic neurons and increases their high-affinity dopamine uptake. GDNF-binding leads to autophosphorylation and activation of the RET receptor. This chain is GDNF family receptor alpha-1 (GFRA1), found in Gallus gallus (Chicken).